The chain runs to 439 residues: MGVANDSSPEYQWMSPHRLSDTVILGDCLYFNNIMSQLDLHQNWAPSVRLLNYFKNFNKETLLKIEENDYINSSFFQQKDKRFYPINDDFYHISTGGYGIVFKIDNYVVKFVFEATKLYSPMETTAEFTVPKFLYNNLKGDEKKLIVCAWAMGLNYKLTFLHTLYKRVLHMLLLLIQTMDGQELSLRYSSKVFLKAFNERKDSIKFVKLLSHFYPAVINSNINVINYFNRMFHFFEHEKRTNYEYERGNIIIFPLALYSADKVDTELAIKLGFKSLVQYIKFIFLQMALLYIKIYELPCCDNFLHADLKPDNILLFDSNEPIIIHLKDKKFVFNERIKSALNDFDFSQVAGIINKKIKNNFKVKHNWYYDFHFFVHTLLKTYPEIEKDIEFSTALEEFIMCTKTDCDKYRLKVSILHPISFLEKFIMRDIFSDWINGGN.

Residues 87–439 (NDDFYHISTG…IFSDWINGGN (353 aa)) enclose the Protein kinase domain. ATP is bound by residues 93-101 (ISTGGYGIV) and lysine 117. Aspartate 307 (proton acceptor) is an active-site residue.

The protein belongs to the protein kinase superfamily. Ser/Thr protein kinase family. Poxviruses subfamily. Post-translationally, phosphorylated in vivo. Autophosphorylated in vitro.

It localises to the host endoplasmic reticulum. The protein resides in the host endoplasmic reticulum-Golgi intermediate compartment. The catalysed reaction is L-seryl-[protein] + ATP = O-phospho-L-seryl-[protein] + ADP + H(+). The enzyme catalyses L-threonyl-[protein] + ATP = O-phospho-L-threonyl-[protein] + ADP + H(+). In terms of biological role, essential serine-protein kinase involved in the early stage of virion morphogenesis. This Vaccinia virus (strain Ankara) (VACV) protein is Serine/threonine-protein kinase 2 (OPG054).